Here is a 318-residue protein sequence, read N- to C-terminus: Actin-related protein 2/3 complex subunit 2A (318 aa).

Residues 297-318 form a disordered region; that stretch reads RSMNNKSFKRLGLNEVNHTNSK.

The protein belongs to the ARPC2 family. As to quaternary structure, component of the Arp2/3 complex composed of ARP2, ARP3, ARPC1/p41-ARC, ARPC2/p34-ARC, ARPC3/p21-ARC, ARPC4/p20-ARC and ARPC5/p16-ARC. Interacts with ARPC4. As to expression, expressed at low levels in all tissues with a relatively highest expression in inflorescences.

It localises to the cytoplasm. Its subcellular location is the cytoskeleton. The protein localises to the cell projection. Functionally, functions as actin-binding component of the Arp2/3 complex which is involved in regulation of actin polymerization and together with an activating nucleation-promoting factor (NPF) mediates the formation of branched actin networks. Seems to contact the mother actin filament. Arp2/3 complex plays a critical role in the control of cell morphogenesis via the modulation of cell polarity development. In Arabidopsis thaliana (Mouse-ear cress), this protein is Actin-related protein 2/3 complex subunit 2A (ARPC2A).